Consider the following 508-residue polypeptide: 6-phosphogluconate dehydrogenase, decarboxylating 2, chloroplastic (508 aa).

The transit peptide at 1–12 directs the protein to the chloroplast; the sequence is MASPAPAPPAAS. NADP(+) contacts are provided by residues 28-33, 51-53, 95-97, and N123; these read GLATMG, NRT, and VQA. Residues N123 and 149-151 each bind substrate; that span reads SGG. K203 functions as the Proton acceptor in the catalytic mechanism. Position 206-207 (206-207) interacts with substrate; sequence HN. Residue E210 is the Proton donor of the active site. Substrate contacts are provided by Y211, K284, R311, R475, and H481.

Belongs to the 6-phosphogluconate dehydrogenase family. As to quaternary structure, homodimer.

It localises to the plastid. It is found in the chloroplast. It carries out the reaction 6-phospho-D-gluconate + NADP(+) = D-ribulose 5-phosphate + CO2 + NADPH. It participates in carbohydrate degradation; pentose phosphate pathway; D-ribulose 5-phosphate from D-glucose 6-phosphate (oxidative stage): step 3/3. Catalyzes the oxidative decarboxylation of 6-phosphogluconate to ribulose 5-phosphate and CO(2), with concomitant reduction of NADP to NADPH. The polypeptide is 6-phosphogluconate dehydrogenase, decarboxylating 2, chloroplastic (G6PGH2) (Oryza sativa subsp. japonica (Rice)).